The primary structure comprises 262 residues: Type III pantothenate kinase (262 aa).

6 to 13 lines the ATP pocket; the sequence is DVGNTNAV. Residues tyrosine 100 and 107 to 110 contribute to the substrate site; that span reads GADR. Catalysis depends on aspartate 109, which acts as the Proton acceptor. Aspartate 129 lines the K(+) pocket. Threonine 132 is an ATP binding site. Threonine 184 lines the substrate pocket.

The protein belongs to the type III pantothenate kinase family. In terms of assembly, homodimer. Requires NH4(+) as cofactor. K(+) is required as a cofactor.

The protein resides in the cytoplasm. It carries out the reaction (R)-pantothenate + ATP = (R)-4'-phosphopantothenate + ADP + H(+). Its pathway is cofactor biosynthesis; coenzyme A biosynthesis; CoA from (R)-pantothenate: step 1/5. Catalyzes the phosphorylation of pantothenate (Pan), the first step in CoA biosynthesis. The protein is Type III pantothenate kinase of Bacillus anthracis (strain A0248).